We begin with the raw amino-acid sequence, 1523 residues long: Disco-interacting protein 2 homolog A (1523 aa).

In terms of domain architecture, DMAP1-binding spans 9–105; it reads EAAPLPAEVL…TSSASEDEGS (97 aa). Positions 72–110 are disordered; sequence KMPMPSKRRSALVHSSVETYTPPDTSSASEDEGSLRRPG. A compositionally biased stretch (polar residues) spans 87–99; it reads SVETYTPPDTSSA. Residues Thr92 and Thr115 each carry the phosphothreonine modification. Positions 132–158 are disordered; it reads QGSSTSSSASSTSSHPGGRPAAAPSAS. Residues 134 to 158 are compositionally biased toward low complexity; that stretch reads SSTSSSASSTSSHPGGRPAAAPSAS. 2 consecutive short sequence motifs (PXXP motif; required for interaction with CTTN) follow at residues 235-238 and 259-262; these read PKRP and PNQP.

Belongs to the DIP2 family. Interacts with FSTL1; DIP2A may act as a cell surface receptor for FSTL1. Interacts (via N-terminus) with CTTN (via SH3 domain); the interaction promotes acetylation of CTTN and is required for proper synaptic transmission. Interacts with SHANK3. Detected in heart, liver, spleen, lung, kidney and brain with highest levels in brain (at protein level). In adult cortex, preferentially expressed in excitatory neurons. Broadly expressed in neuronal, reproductive and vascular tissues as well as in heart, kidney, liver and lung with expression detected in neurons, mesenchyme, endothelium, smooth muscle cells and cardiomyocytes. Expressed in ectoderm-derived tissues in the developing embryo. Expressed in the developing nervous system.

It localises to the cell membrane. Its subcellular location is the mitochondrion. The protein resides in the cell projection. It is found in the dendritic spine. It catalyses the reaction acetate + ATP + CoA = acetyl-CoA + AMP + diphosphate. Functionally, catalyzes the de novo synthesis of acetyl-CoA in vitro. Promotes acetylation of CTTN, possibly by providing the acetyl donor, ensuring correct dendritic spine morphology and synaptic transmission. Binds to follistatin-related protein FSTL1 and may act as a cell surface receptor for FSTL1, contributing to AKT activation and subsequent FSTL1-induced survival and function of endothelial cells and cardiac myocytes. The chain is Disco-interacting protein 2 homolog A (Dip2a) from Mus musculus (Mouse).